Consider the following 292-residue polypeptide: Acetyl-coenzyme A carboxylase carboxyl transferase subunit beta (292 aa).

Positions 36–292 (MWSKCEKCAK…LLRMHEVDYE (257 aa)) constitute a CoA carboxyltransferase N-terminal domain. 4 residues coordinate Zn(2+): cysteine 40, cysteine 43, cysteine 59, and cysteine 62. The C4-type zinc finger occupies 40–62 (CEKCAKILYTEDLRENFNVCPNC).

The protein belongs to the AccD/PCCB family. Acetyl-CoA carboxylase is a heterohexamer composed of biotin carboxyl carrier protein (AccB), biotin carboxylase (AccC) and two subunits each of ACCase subunit alpha (AccA) and ACCase subunit beta (AccD). Requires Zn(2+) as cofactor.

It is found in the cytoplasm. It catalyses the reaction N(6)-carboxybiotinyl-L-lysyl-[protein] + acetyl-CoA = N(6)-biotinyl-L-lysyl-[protein] + malonyl-CoA. It participates in lipid metabolism; malonyl-CoA biosynthesis; malonyl-CoA from acetyl-CoA: step 1/1. In terms of biological role, component of the acetyl coenzyme A carboxylase (ACC) complex. Biotin carboxylase (BC) catalyzes the carboxylation of biotin on its carrier protein (BCCP) and then the CO(2) group is transferred by the transcarboxylase to acetyl-CoA to form malonyl-CoA. This is Acetyl-coenzyme A carboxylase carboxyl transferase subunit beta from Clostridium perfringens (strain ATCC 13124 / DSM 756 / JCM 1290 / NCIMB 6125 / NCTC 8237 / Type A).